Reading from the N-terminus, the 362-residue chain is Probable cinnamyl alcohol dehydrogenase 9 (362 aa).

Cysteine 45 serves as a coordination point for Zn(2+). Serine 47 contributes to the NADP(+) binding site. Histidine 67, glutamate 68, cysteine 98, cysteine 101, cysteine 104, cysteine 112, and cysteine 167 together coordinate Zn(2+). NADP(+)-binding positions include threonine 171, 192–197 (GLGGLG), 215–220 (STSPWK), threonine 255, glycine 279, and 302–304 (SMI).

It belongs to the zinc-containing alcohol dehydrogenase family. In terms of assembly, homodimer. Requires Zn(2+) as cofactor.

It catalyses the reaction (E)-cinnamyl alcohol + NADP(+) = (E)-cinnamaldehyde + NADPH + H(+). The enzyme catalyses (E)-coniferol + NADP(+) = (E)-coniferaldehyde + NADPH + H(+). It carries out the reaction (E)-sinapyl alcohol + NADP(+) = (E)-sinapaldehyde + NADPH + H(+). The catalysed reaction is (E)-4-coumaroyl alcohol + NADP(+) = (E)-4-coumaraldehyde + NADPH + H(+). It catalyses the reaction (E)-caffeyl alcohol + NADP(+) = (E)-caffeyl aldehyde + NADPH + H(+). Its pathway is aromatic compound metabolism; phenylpropanoid biosynthesis. Functionally, involved in lignin biosynthesis. Catalyzes the final step specific for the production of lignin monomers. Catalyzes the NADPH-dependent reduction of coniferaldehyde, 5-hydroxyconiferaldehyde, sinapaldehyde, 4-coumaraldehyde and caffeyl aldehyde to their respective alcohols. The polypeptide is Probable cinnamyl alcohol dehydrogenase 9 (Oryza sativa subsp. japonica (Rice)).